We begin with the raw amino-acid sequence, 271 residues long: Ribosomal RNA small subunit methyltransferase A (271 aa).

S-adenosyl-L-methionine contacts are provided by histidine 11, leucine 13, glycine 38, glutamate 59, aspartate 84, and asparagine 109.

This sequence belongs to the class I-like SAM-binding methyltransferase superfamily. rRNA adenine N(6)-methyltransferase family. RsmA subfamily.

It is found in the cytoplasm. It catalyses the reaction adenosine(1518)/adenosine(1519) in 16S rRNA + 4 S-adenosyl-L-methionine = N(6)-dimethyladenosine(1518)/N(6)-dimethyladenosine(1519) in 16S rRNA + 4 S-adenosyl-L-homocysteine + 4 H(+). Its function is as follows. Specifically dimethylates two adjacent adenosines (A1518 and A1519) in the loop of a conserved hairpin near the 3'-end of 16S rRNA in the 30S particle. May play a critical role in biogenesis of 30S subunits. The chain is Ribosomal RNA small subunit methyltransferase A from Trichormus variabilis (strain ATCC 29413 / PCC 7937) (Anabaena variabilis).